Reading from the N-terminus, the 243-residue chain is MLTFLIPTAKEMTTPKESHPHLLPQDSQAILKIMTAMTTEDLAKSYRIKEEAAKKEQQRWQDMASQQSLAYPAYQLFNGLMYRHIKRDKLTTQEQAYITQQVYITSSFYGIIPANHPIAEHRHDFHTRIKIEGQSLKSYWRPCYNQFAKEHPQVISLLSSEFDDVFSKDCKQLWISPKFMAEKEGQFKTHSTISKKARGAFLTACMENNCQTVDSLKSLVFAGFYYHPDLSTDYEFVYIKKEA.

It belongs to the UPF0246 family.

The sequence is that of UPF0246 protein M6_Spy1787 from Streptococcus pyogenes serotype M6 (strain ATCC BAA-946 / MGAS10394).